Consider the following 205-residue polypeptide: Small ribosomal subunit protein uS2 (205 aa).

Belongs to the universal ribosomal protein uS2 family.

This is Small ribosomal subunit protein uS2 from Methanoculleus marisnigri (strain ATCC 35101 / DSM 1498 / JR1).